Consider the following 296-residue polypeptide: Pantothenate synthetase (296 aa).

ATP is bound at residue 31-38; sequence MGYLHEGH. The active-site Proton donor is the His38. Gln62 serves as a coordination point for (R)-pantoate. A beta-alanine-binding site is contributed by Gln62. 148 to 151 lines the ATP pocket; the sequence is GEKD. Position 154 (Gln154) interacts with (R)-pantoate. ATP is bound by residues Val177 and 185 to 188; that span reads LSSR.

This sequence belongs to the pantothenate synthetase family. Homodimer.

The protein localises to the cytoplasm. The enzyme catalyses (R)-pantoate + beta-alanine + ATP = (R)-pantothenate + AMP + diphosphate + H(+). The protein operates within cofactor biosynthesis; (R)-pantothenate biosynthesis; (R)-pantothenate from (R)-pantoate and beta-alanine: step 1/1. Catalyzes the condensation of pantoate with beta-alanine in an ATP-dependent reaction via a pantoyl-adenylate intermediate. This is Pantothenate synthetase from Deinococcus geothermalis (strain DSM 11300 / CIP 105573 / AG-3a).